A 20-amino-acid chain; its full sequence is Chrysophsin-3 (20 aa).

Position 20 is a histidine amide (histidine 20).

In terms of tissue distribution, gill.

Its subcellular location is the secreted. Functionally, has antibacterial activity against Gram-positive bacteria B.subtilis ATCC 6633, L.garvieae ATCC 49156 and S.iniae F-8502, and Gram-negative bacteria E.coli WT-2, V.anguillarum ATCC 19264, V.penaeicida KHA, V.harveyi ATCC 14126, V.vulnificus ATCC 33148, A.salmonicida NCMB 1102 and P.putida ATCC 12633. Has hemolytic activity against human red blood cells. Seems to disrupt the membranes by adopting an alpha helical conformation. May play a significant role in innate host defense. The chain is Chrysophsin-3 from Pagrus major (Red sea bream).